We begin with the raw amino-acid sequence, 314 residues long: Methenyltetrahydromethanopterin cyclohydrolase (314 aa).

The protein belongs to the MCH family.

The protein localises to the cytoplasm. The catalysed reaction is 5,10-methenyl-5,6,7,8-tetrahydromethanopterin + H2O = N(5)-formyl-5,6,7,8-tetrahydromethanopterin + H(+). The protein operates within one-carbon metabolism; methanogenesis from CO(2); 5,10-methenyl-5,6,7,8-tetrahydromethanopterin from CO(2): step 3/3. Functionally, catalyzes the reversible interconversion of 5-formyl-H(4)MPT to methenyl-H(4)MPT(+). The chain is Methenyltetrahydromethanopterin cyclohydrolase from Methanocorpusculum labreanum (strain ATCC 43576 / DSM 4855 / Z).